A 33-amino-acid chain; its full sequence is Brevinin-2Rh (33 aa).

Residues cysteine 27 and cysteine 33 are joined by a disulfide bond.

Expressed by the skin glands.

The protein localises to the secreted. Antimicrobial peptide. In Pelophylax ridibundus (Marsh frog), this protein is Brevinin-2Rh.